The following is a 136-amino-acid chain: T-cell receptor beta chain V region LB2 (136 aa).

The first 21 residues, 1–21 (MNKWVFCWVTLCLLTVETTHG), serve as a signal peptide directing secretion. Residues 22 to 116 (DGGIITQTPK…EMTVFLCASS (95 aa)) form a v segment region. The cysteines at positions 45 and 113 are disulfide-linked. Residues 117-120 (IRLA) are d segment. The segment at 121 to 136 (SAETLYFGSGTRLTVL) is j segment.

In Mus musculus (Mouse), this protein is T-cell receptor beta chain V region LB2.